The following is a 2427-amino-acid chain: Interferon-induced very large GTPase 1 (2427 aa).

In terms of domain architecture, VLIG-type G spans 1485–1726 (DKRLFVLSVL…KISDFKFRVQ (242 aa)). Residues 1495-1502 (GLQSSGKS), 1548-1551 (DTEG), and 1625-1628 (TAKD) each bind GTP.

Belongs to the TRAFAC class dynamin-like GTPase superfamily. Very large inducible GTPase (VLIG) family. As to expression, widely expressed. Expressed at low basal level in lung, heart, thymus and spleen; at still lower level in liver, ovary, kidney and brain. Expressed at very weak level in testis. Undetectable in embryo.

The protein localises to the cytoplasm. The protein resides in the cytosol. Its subcellular location is the nucleus. The polypeptide is Interferon-induced very large GTPase 1 (Gvin1) (Mus musculus (Mouse)).